Here is a 440-residue protein sequence, read N- to C-terminus: Endoplasmic reticulum junction formation protein lunapark (440 aa).

Residues 1–45 lie on the Cytoplasmic side of the membrane; that stretch reads MGALLAKWRAKPSTVEVLEKMEKDIQSLEEFRDKNQKLRKIWVAR. A coiled-coil region spans residues 16 to 40; that stretch reads EVLEKMEKDIQSLEEFRDKNQKLRK. The helical transmembrane segment at 46–66 threads the bilayer; sequence LFFYSTILYILTSLTVYLWYL. Topologically, residues 67 to 77 are lumenal; the sequence is PGGMTARLLTT. Residues 78-98 traverse the membrane as a helical segment; it reads LLFLLFPVLIWFVRTLLILWF. At 99–440 the chain is on the cytoplasmic side; the sequence is SRRTERNNDA…ESEESFMETE (342 aa). Positions 100–128 form a coiled coil; the sequence is RRTERNNDALELLKAEKKKILEEVMEKET. The tract at residues 149-169 is disordered; the sequence is LELPVPGPPITPRPGQDLRQR. T159 is modified (phosphothreonine). A phosphoserine mark is found at S177, S179, S188, and S192. T198 carries the phosphothreonine modification. The tract at residues 202–247 is disordered; the sequence is QRDTSAPGGPPERSVQPTPQSNILQRRPGSPATAVSGMALHPPGPP. S206 and S215 each carry phosphoserine. Residues 216 to 225 show a composition bias toward polar residues; it reads VQPTPQSNIL. Residue T219 is modified to Phosphothreonine. Phosphoserine occurs at positions 222 and 231. The C4-type; plays a role in ER morphology zinc finger occupies 280–305; that stretch reads CQQCFSHNGMALKEEFEYVAFRCAYC. The segment at 316–440 is disordered; the sequence is PQAPRLQEIS…ESEESFMETE (125 aa). S325 carries the post-translational modification Phosphoserine. Positions 334–343 are enriched in polar residues; the sequence is DSQGSVNTLQ. 2 stretches are compositionally biased toward acidic residues: residues 370 to 411 and 431 to 440; these read QAIE…DDTE and ESEESFMETE.

The protein belongs to the lunapark family. Homodimer; homodimerization requires the C4-type zinc finger motif and decreases during mitosis in a phosphorylation-dependent manner. Post-translationally, phosphorylated. Phosphorylation at Thr-159 and Ser-325 occurs during interphase. Phosphorylation at Ser-177, Ser-179, Ser-188, Ser-192, Thr-198, Ser-206, Ser-215, Thr-219, Ser-222 and Ser-231 occurs during mitosis; these phosphorylations reduce both its homodimerization and the ER three-way tubular junction formation.

The protein resides in the endoplasmic reticulum membrane. Its function is as follows. Endoplasmic reticulum (ER)-shaping membrane protein that plays a role in determining ER morphology. Involved in the stabilization of nascent three-way ER tubular junctions within the ER network. May also play a role as a curvature-stabilizing protein within three-way ER tubular junction network. This chain is Endoplasmic reticulum junction formation protein lunapark (lnpk), found in Xenopus laevis (African clawed frog).